The following is a 340-amino-acid chain: Glycerol-3-phosphate dehydrogenase [NAD(P)+] (340 aa).

Positions 14, 15, 35, and 108 each coordinate NADPH. Positions 108 and 136 each coordinate sn-glycerol 3-phosphate. Residue alanine 140 coordinates NADPH. The sn-glycerol 3-phosphate site is built by lysine 191, aspartate 244, serine 254, arginine 255, and asparagine 256. The active-site Proton acceptor is the lysine 191. Arginine 255 provides a ligand contact to NADPH. NADPH is bound by residues valine 279 and glutamate 281.

Belongs to the NAD-dependent glycerol-3-phosphate dehydrogenase family.

It is found in the cytoplasm. The enzyme catalyses sn-glycerol 3-phosphate + NAD(+) = dihydroxyacetone phosphate + NADH + H(+). It catalyses the reaction sn-glycerol 3-phosphate + NADP(+) = dihydroxyacetone phosphate + NADPH + H(+). It functions in the pathway membrane lipid metabolism; glycerophospholipid metabolism. In terms of biological role, catalyzes the reduction of the glycolytic intermediate dihydroxyacetone phosphate (DHAP) to sn-glycerol 3-phosphate (G3P), the key precursor for phospholipid synthesis. This is Glycerol-3-phosphate dehydrogenase [NAD(P)+] from Ectopseudomonas mendocina (strain ymp) (Pseudomonas mendocina).